A 107-amino-acid polypeptide reads, in one-letter code: Large ribosomal subunit protein eL33 (107 aa).

This sequence belongs to the eukaryotic ribosomal protein eL33 family. As to quaternary structure, component of the large ribosomal subunit. Mature ribosomes consist of a small (40S) and a large (60S) subunit. The 40S subunit contains about 32 different proteins and 1 molecule of RNA (18S). The 60S subunit contains 45 different proteins and 3 molecules of RNA (25S, 5.8S and 5S).

It localises to the cytoplasm. Functionally, component of the ribosome, a large ribonucleoprotein complex responsible for the synthesis of proteins in the cell. The small ribosomal subunit (SSU) binds messenger RNAs (mRNAs) and translates the encoded message by selecting cognate aminoacyl-transfer RNA (tRNA) molecules. The large subunit (LSU) contains the ribosomal catalytic site termed the peptidyl transferase center (PTC), which catalyzes the formation of peptide bonds, thereby polymerizing the amino acids delivered by tRNAs into a polypeptide chain. The nascent polypeptides leave the ribosome through a tunnel in the LSU and interact with protein factors that function in enzymatic processing, targeting, and the membrane insertion of nascent chains at the exit of the ribosomal tunnel. This is Large ribosomal subunit protein eL33 from Candida albicans (strain SC5314 / ATCC MYA-2876) (Yeast).